The sequence spans 347 residues: S-adenosylmethionine:tRNA ribosyltransferase-isomerase (347 aa).

The protein belongs to the QueA family. Monomer.

It is found in the cytoplasm. It catalyses the reaction 7-aminomethyl-7-carbaguanosine(34) in tRNA + S-adenosyl-L-methionine = epoxyqueuosine(34) in tRNA + adenine + L-methionine + 2 H(+). It functions in the pathway tRNA modification; tRNA-queuosine biosynthesis. Its function is as follows. Transfers and isomerizes the ribose moiety from AdoMet to the 7-aminomethyl group of 7-deazaguanine (preQ1-tRNA) to give epoxyqueuosine (oQ-tRNA). This chain is S-adenosylmethionine:tRNA ribosyltransferase-isomerase, found in Pseudomonas aeruginosa (strain UCBPP-PA14).